The following is a 722-amino-acid chain: Zinc finger BED domain-containing protein RICESLEEPER 2 (722 aa).

The segment at 66 to 134 (RKKSLVWEHF…QEHKLALTPA (69 aa)) adopts a BED-type zinc-finger fold. Cys89, Cys92, His113, and His127 together coordinate Zn(2+). Positions 572–592 (VEQGDGNNAPASENGTQATAP) are disordered. Residues 576 to 592 (DGNNAPASENGTQATAP) are compositionally biased toward polar residues. Residues 617–702 (ELEQYLDESL…EALVCAKDWL (86 aa)) form an HATC (Hobo-Ac-Tam3) domain region.

In terms of assembly, homodimer.

It localises to the nucleus. Transposase-like protein that is essential for plant growth and development. May regulate global gene expression by recruiting other cellular factors. The polypeptide is Zinc finger BED domain-containing protein RICESLEEPER 2 (Oryza sativa subsp. japonica (Rice)).